Reading from the N-terminus, the 319-residue chain is tRNA dimethylallyltransferase (319 aa).

Glycine 26 to serine 33 contributes to the ATP binding site. Substrate is bound at residue threonine 28 to serine 33. Residues aspartate 51–glutamine 54 form an interaction with substrate tRNA region.

The protein belongs to the IPP transferase family. In terms of assembly, monomer. Mg(2+) serves as cofactor.

The enzyme catalyses adenosine(37) in tRNA + dimethylallyl diphosphate = N(6)-dimethylallyladenosine(37) in tRNA + diphosphate. Functionally, catalyzes the transfer of a dimethylallyl group onto the adenine at position 37 in tRNAs that read codons beginning with uridine, leading to the formation of N6-(dimethylallyl)adenosine (i(6)A). This Salinispora tropica (strain ATCC BAA-916 / DSM 44818 / JCM 13857 / NBRC 105044 / CNB-440) protein is tRNA dimethylallyltransferase.